A 345-amino-acid polypeptide reads, in one-letter code: MNDHHLNHRIINNINASSSSSSSSSPVQTNININSANNTNNNNNNNNNNNNNNNNNNNNIDNKWKKNLYEKQPYSDNYTDETFLIGLVQNANFIKYDFWTVVLDSFTVSQQITSVILFAIIFFHSLKHTLTLPFLVAMAGGFLVLGYIAIIIIDPSANFLSIRSSFLHIILLFGTVYGLSPVLRTLTNSFSDDTIWALTFILLLAHLFFHDYGYTNNESQKFSAPVSLNAAIFASVLLGSRLPSNIHVFVLISYAIETFALFPIFRHHLKRHSMELHVGLTVILCVTCSLLLLGMSKLLALIYIGIIGTITFVCPLWLIFIQKYKNEINGPWDEASVISQSGGEF.

Over residues 13 to 61 the composition is skewed to low complexity; sequence NINASSSSSSSSSPVQTNININSANNTNNNNNNNNNNNNNNNNNNNNID. Residues 13–62 are disordered; it reads NINASSSSSSSSSPVQTNININSANNTNNNNNNNNNNNNNNNNNNNNIDN. Transmembrane regions (helical) follow at residues 106-126, 133-153, 159-179, 194-214, 222-242, 245-265, 276-296, and 301-321; these read FTVSQQITSVILFAIIFFHSL, PFLVAMAGGFLVLGYIAIIII, FLSIRSSFLHIILLFGTVYGL, TIWALTFILLLAHLFFHDYGY, FSAPVSLNAAIFASVLLGSRL, NIHVFVLISYAIETFALFPIF, LHVGLTVILCVTCSLLLLGMS, and LIYIGIIGTITFVCPLWLIFI.

Belongs to the PIGC family. Component of the phosphatidylinositol N-acetylglucosaminyltransferase complex.

The protein localises to the endoplasmic reticulum membrane. It catalyses the reaction a 1,2-diacyl-sn-glycero-3-phospho-(1D-myo-inositol) + UDP-N-acetyl-alpha-D-glucosamine = a 6-(N-acetyl-alpha-D-glucosaminyl)-1-(1,2-diacyl-sn-glycero-3-phospho)-1D-myo-inositol + UDP + H(+). Its pathway is glycolipid biosynthesis; glycosylphosphatidylinositol-anchor biosynthesis. Functionally, part of the complex catalyzing the transfer of N-acetylglucosamine from UDP-N-acetylglucosamine to phosphatidylinositol, the first step of GPI biosynthesis. The chain is Putative phosphatidylinositol N-acetylglucosaminyltransferase subunit C (pigC) from Dictyostelium discoideum (Social amoeba).